The primary structure comprises 328 residues: E3 ubiquitin-protein ligase SINA-like 5 (328 aa).

The interval 1 to 77 (MARSGGNDGH…GSPKSSQPVK (77 aa)) is disordered. Composition is skewed to acidic residues over residues 10-20 (HEEELDPELFE) and 27-62 (GYED…ENVT). The segment covering 63–77 (TDEQSGSPKSSQPVK) has biased composition (polar residues). The RING-type; degenerate zinc finger occupies 86–122 (CPTCCEPLKRPIYQCSNGHLACSSCCQKLNKKCSFCR). The tract at residues 136–324 (VIEASIVPCP…MQICIAYGYK (189 aa)) is SBD. An SIAH-type; degenerate zinc finger spans residues 139 to 197 (ASIVPCPNAKHGCKETTTYCNQSSHEKVCKFVRCSCPVSNCNYVSSYSNLKSHACSTAH). Cys-144, Cys-151, His-163, Cys-167, Cys-174, Cys-179, His-191, and His-197 together coordinate Zn(2+).

Belongs to the SINA (Seven in absentia) family.

It carries out the reaction S-ubiquitinyl-[E2 ubiquitin-conjugating enzyme]-L-cysteine + [acceptor protein]-L-lysine = [E2 ubiquitin-conjugating enzyme]-L-cysteine + N(6)-ubiquitinyl-[acceptor protein]-L-lysine.. It participates in protein modification; protein ubiquitination. Its function is as follows. E3 ubiquitin-protein ligase that mediates ubiquitination and subsequent proteasomal degradation of target proteins. E3 ubiquitin ligases accept ubiquitin from an E2 ubiquitin-conjugating enzyme in the form of a thioester and then directly transfers the ubiquitin to targeted substrates. It probably triggers the ubiquitin-mediated degradation of different substrates. This chain is E3 ubiquitin-protein ligase SINA-like 5, found in Arabidopsis thaliana (Mouse-ear cress).